We begin with the raw amino-acid sequence, 549 residues long: Cytoplasmic trehalase (549 aa).

Substrate contacts are provided by residues Arg-168, 175-176 (WD), Asn-212, 221-223 (RSQ), 292-294 (RDE), and Gly-324. Residues Asp-326 and Glu-509 each act as proton donor/acceptor in the active site. Glu-525 is a substrate binding site.

This sequence belongs to the glycosyl hydrolase 37 family. Monomer.

Its subcellular location is the cytoplasm. The enzyme catalyses alpha,alpha-trehalose + H2O = alpha-D-glucose + beta-D-glucose. It functions in the pathway glycan degradation; trehalose degradation; D-glucose from alpha,alpha-trehalose: step 1/1. Functionally, hydrolyzes trehalose to glucose. Could be involved, in cells returning to low osmolarity conditions, in the utilization of the accumulated cytoplasmic trehalose, which was synthesized in response to high osmolarity. This is Cytoplasmic trehalase from Shigella flexneri serotype 5b (strain 8401).